We begin with the raw amino-acid sequence, 189 residues long: CASP-like protein 1F2 (189 aa).

Residues 1–27 (MESLEVANGKSSALGVSREASSPPQMG) are Cytoplasmic-facing. The helical transmembrane segment at 28–48 (FFIAQVVLRFFTLAFTGAAIA) threads the bilayer. Over 49 to 77 (VMVTAKETVEVFSISFTVRYSYLSAFKFL) the chain is Extracellular. The chain crosses the membrane as a helical span at residues 78–98 (VGADAVVCGFSMLSLIFVSIF). The Cytoplasmic segment spans residues 99–113 (NKGKSNHYFFLYFHD). A helical membrane pass occupies residues 114–134 (LILMVLSMSACAAATAVGYVG). Over 135 to 156 (RYGQDKAAWMAVCGNVKMFCDK) the chain is Extracellular. Residues 157 to 177 (ALASILLSLIGFICLFLLTIM) form a helical membrane-spanning segment. Topologically, residues 178–189 (AARNLRVSGHLI) are cytoplasmic.

This sequence belongs to the Casparian strip membrane proteins (CASP) family. In terms of assembly, homodimer and heterodimers.

It localises to the cell membrane. This Vitis vinifera (Grape) protein is CASP-like protein 1F2.